The primary structure comprises 140 residues: TGEKPFTCKECSKSFSSNSHLSRHQKIHSGVKSFTCTECDKKFLTRSSLLLHQKVHTGEKPFICTECGKGFSAKSQLHRHHVIHTGDRPFTCAECGKTFSYKQSLVTHRAAHTREKPFICTECGKSFSHKNNLQTHLKSH.

5 consecutive C2H2-type zinc fingers follow at residues 6 to 28, 34 to 56, 62 to 84, 90 to 112, and 118 to 140; these read FTCKECSKSFSSNSHLSRHQKIH, FTCTECDKKFLTRSSLLLHQKVH, FICTECGKGFSAKSQLHRHHVIH, FTCAECGKTFSYKQSLVTHRAAH, and FICTECGKSFSHKNNLQTHLKSH.

Belongs to the krueppel C2H2-type zinc-finger protein family.

The protein resides in the nucleus. Its function is as follows. May be involved in transcriptional regulation. The chain is Oocyte zinc finger protein XlCOF15 from Xenopus laevis (African clawed frog).